Consider the following 132-residue polypeptide: Small ribosomal subunit protein uS8 (132 aa).

This sequence belongs to the universal ribosomal protein uS8 family. As to quaternary structure, part of the 30S ribosomal subunit. Contacts proteins S5 and S12.

Functionally, one of the primary rRNA binding proteins, it binds directly to 16S rRNA central domain where it helps coordinate assembly of the platform of the 30S subunit. This chain is Small ribosomal subunit protein uS8, found in Brevibacillus brevis (strain 47 / JCM 6285 / NBRC 100599).